The chain runs to 446 residues: Putative ZDHHC-type palmitoyltransferase 2 (446 aa).

Disordered regions lie at residues 1-33 and 56-83; these read MNLY…INNN and QIIN…HNNP. 4 N-linked (GlcNAc...) asparagine glycosylation sites follow: N5, N8, N14, and N21. The segment covering 56–81 has biased composition (low complexity); the sequence is QIINKNNNNNHNRNNNNNNNNNNNHN. N-linked (GlcNAc...) asparagine glycans are attached at residues N141, N145, N159, and N165. The next 5 helical transmembrane spans lie at 178-198, 210-230, 305-325, 349-369, and 410-430; these read IVIF…IFPW, IHSF…YLCS, YFVL…TLLI, LFLL…IMAL, and IISN…LPTI. The 51-residue stretch at 261–311 folds into the DHHC domain; that stretch reads KWCNKCNHQKPERAHHCRYCNRCVLRMDHHCQWLQNCIGLFNQKYFVLFLF.

It belongs to the DHHC palmitoyltransferase family.

Its subcellular location is the membrane. It carries out the reaction L-cysteinyl-[protein] + hexadecanoyl-CoA = S-hexadecanoyl-L-cysteinyl-[protein] + CoA. This Dictyostelium discoideum (Social amoeba) protein is Putative ZDHHC-type palmitoyltransferase 2.